The chain runs to 285 residues: Undecaprenyl-diphosphatase (285 aa).

A run of 7 helical transmembrane segments spans residues 12–34 (IVIA…HAVI), 49–69 (IFLP…LVYF), 93–113 (IHIL…GGLL), 120–140 (LFGT…LLLL), 159–179 (LTYA…LPGI), 234–254 (VATI…AFLM), and 263–283 (WALS…FFIL).

The protein belongs to the UppP family.

The protein resides in the cell inner membrane. It catalyses the reaction di-trans,octa-cis-undecaprenyl diphosphate + H2O = di-trans,octa-cis-undecaprenyl phosphate + phosphate + H(+). In terms of biological role, catalyzes the dephosphorylation of undecaprenyl diphosphate (UPP). Confers resistance to bacitracin. In Gluconacetobacter diazotrophicus (strain ATCC 49037 / DSM 5601 / CCUG 37298 / CIP 103539 / LMG 7603 / PAl5), this protein is Undecaprenyl-diphosphatase.